A 498-amino-acid polypeptide reads, in one-letter code: NADP-dependent glyceraldehyde-3-phosphate dehydrogenase (498 aa).

Substrate contacts are provided by residues Arg118 and 171-172; that span reads NY. Lys194, Thr197, and Asp232 together coordinate NADP(+). 247–251 is a binding site for NAD(+); it reads GGDTG. The active-site Proton acceptor is Glu266. Substrate is bound at residue 299–301; the sequence is RCT. Cys300 acts as the Nucleophile in catalysis. NADP(+) is bound at residue Glu393. Arg453 serves as a coordination point for substrate.

It belongs to the aldehyde dehydrogenase family.

The protein resides in the cytoplasm. The enzyme catalyses D-glyceraldehyde 3-phosphate + NADP(+) + H2O = (2R)-3-phosphoglycerate + NADPH + 2 H(+). In terms of biological role, important as a means of generating NADPH for biosynthetic reactions. This chain is NADP-dependent glyceraldehyde-3-phosphate dehydrogenase (GPN1), found in Zea mays (Maize).